The following is a 382-amino-acid chain: Mannitol-1-phosphate 5-dehydrogenase (382 aa).

An NAD(+)-binding site is contributed by 3-14 (ALHFGAGNIGRG). K269 is subject to N6-acetyllysine.

The protein belongs to the mannitol dehydrogenase family.

The catalysed reaction is D-mannitol 1-phosphate + NAD(+) = beta-D-fructose 6-phosphate + NADH + H(+). This chain is Mannitol-1-phosphate 5-dehydrogenase, found in Escherichia coli O139:H28 (strain E24377A / ETEC).